The sequence spans 138 residues: UPF0047 protein MJ1081 (138 aa).

Belongs to the UPF0047 family.

This is UPF0047 protein MJ1081 from Methanocaldococcus jannaschii (strain ATCC 43067 / DSM 2661 / JAL-1 / JCM 10045 / NBRC 100440) (Methanococcus jannaschii).